The following is a 520-amino-acid chain: Glutamate--cysteine ligase (520 aa).

This sequence belongs to the glutamate--cysteine ligase type 1 family. Type 1 subfamily.

It carries out the reaction L-cysteine + L-glutamate + ATP = gamma-L-glutamyl-L-cysteine + ADP + phosphate + H(+). The protein operates within sulfur metabolism; glutathione biosynthesis; glutathione from L-cysteine and L-glutamate: step 1/2. The chain is Glutamate--cysteine ligase from Sodalis glossinidius (strain morsitans).